The primary structure comprises 161 residues: Large ribosomal subunit protein uL15 (161 aa).

The segment at 1-57 (MRLKDAIPKKGSQQRGRRVGRGISAGQGASCGKGMRGQKSRSGGSTRPGFEGGQNPL) is disordered. Gly residues predominate over residues 23-35 (ISAGQGASCGKGM).

The protein belongs to the universal ribosomal protein uL15 family. Part of the 50S ribosomal subunit.

Its function is as follows. Binds to the 23S rRNA. This is Large ribosomal subunit protein uL15 from Trichodesmium erythraeum (strain IMS101).